Here is an 871-residue protein sequence, read N- to C-terminus: Alanine--tRNA ligase (871 aa).

Zn(2+) contacts are provided by His590, His594, Cys694, and His698.

It belongs to the class-II aminoacyl-tRNA synthetase family. The cofactor is Zn(2+).

The protein localises to the cytoplasm. It carries out the reaction tRNA(Ala) + L-alanine + ATP = L-alanyl-tRNA(Ala) + AMP + diphosphate. Catalyzes the attachment of alanine to tRNA(Ala) in a two-step reaction: alanine is first activated by ATP to form Ala-AMP and then transferred to the acceptor end of tRNA(Ala). Also edits incorrectly charged Ser-tRNA(Ala) and Gly-tRNA(Ala) via its editing domain. This is Alanine--tRNA ligase from Thermoplasma acidophilum (strain ATCC 25905 / DSM 1728 / JCM 9062 / NBRC 15155 / AMRC-C165).